The following is a 322-amino-acid chain: Quinolinate synthase (322 aa).

Iminosuccinate is bound by residues H37 and S54. C99 is a binding site for [4Fe-4S] cluster. Residues 125 to 127 and S142 contribute to the iminosuccinate site; that span reads YIN. C185 contributes to the [4Fe-4S] cluster binding site. Residues 211–213 and T228 each bind iminosuccinate; that span reads HPE. [4Fe-4S] cluster is bound at residue C278.

Belongs to the quinolinate synthase family. Type 2 subfamily. [4Fe-4S] cluster is required as a cofactor.

Its subcellular location is the cytoplasm. The enzyme catalyses iminosuccinate + dihydroxyacetone phosphate = quinolinate + phosphate + 2 H2O + H(+). The protein operates within cofactor biosynthesis; NAD(+) biosynthesis; quinolinate from iminoaspartate: step 1/1. Its function is as follows. Catalyzes the condensation of iminoaspartate with dihydroxyacetone phosphate to form quinolinate. In Chlorobaculum parvum (strain DSM 263 / NCIMB 8327) (Chlorobium vibrioforme subsp. thiosulfatophilum), this protein is Quinolinate synthase.